The following is a 140-amino-acid chain: Chorion class A protein Ld2/Ld41 (140 aa).

The signal sequence occupies residues 1–21 (MNSFALLLVCIQACLVQSVFS).

This sequence belongs to the chorion protein family.

In terms of biological role, this protein is one of many from the eggshell of the gypsy moth. The protein is Chorion class A protein Ld2/Ld41 of Lymantria dispar (Gypsy moth).